Reading from the N-terminus, the 117-residue chain is Holo-[acyl-carrier-protein] synthase (117 aa).

Aspartate 8 and glutamate 58 together coordinate Mg(2+).

Belongs to the P-Pant transferase superfamily. AcpS family. It depends on Mg(2+) as a cofactor.

It localises to the cytoplasm. The catalysed reaction is apo-[ACP] + CoA = holo-[ACP] + adenosine 3',5'-bisphosphate + H(+). Functionally, transfers the 4'-phosphopantetheine moiety from coenzyme A to a Ser of acyl-carrier-protein. The chain is Holo-[acyl-carrier-protein] synthase from Enterococcus faecalis (strain ATCC 700802 / V583).